The following is a 397-amino-acid chain: Metallophosphoesterase 1 (397 aa).

A helical membrane pass occupies residues 27–47 (IAVVFAVLLFCEFLIYYLAIF). The a divalent metal cation site is built by Asp-77, Asp-119, Asn-157, His-250, His-304, and His-306. A helical transmembrane segment spans residues 357–377 (VVLIIYCGMVGFLVVLTLTHF). The short motif at 393-397 (KRKTR) is the Di-lysine motif element.

Belongs to the metallophosphoesterase superfamily. MPPE1 family. In terms of assembly, interacts with GPI-anchor proteins (via the GPI portion). Interacts with TMED10. Requires Mn(2+) as cofactor.

It is found in the endoplasmic reticulum-Golgi intermediate compartment membrane. Its function is as follows. Metallophosphoesterase that catalyzes the removal of a side-chain ethanolamine-phosphate (EtNP) from the second mannose of the GPI-anchor protein intermediate. Participates in the glycan remodeling steps of GPI-anchor maturation to allow an efficient transport of GPI-anchor proteins from the endoplasmic reticulum to the Golgi. This chain is Metallophosphoesterase 1, found in Pongo abelii (Sumatran orangutan).